Consider the following 474-residue polypeptide: Ribulose bisphosphate carboxylase large chain (474 aa).

Positions 117 and 167 each coordinate substrate. The Proton acceptor role is filled by lysine 169. Position 171 (lysine 171) interacts with substrate. Lysine 195, aspartate 197, and glutamate 198 together coordinate Mg(2+). The residue at position 195 (lysine 195) is an N6-carboxylysine. Histidine 288 functions as the Proton acceptor in the catalytic mechanism. Residues arginine 289, histidine 321, and serine 373 each coordinate substrate.

Belongs to the RuBisCO large chain family. Type I subfamily. As to quaternary structure, heterohexadecamer of 8 large chains and 8 small chains. The cofactor is Mg(2+).

It carries out the reaction 2 (2R)-3-phosphoglycerate + 2 H(+) = D-ribulose 1,5-bisphosphate + CO2 + H2O. The enzyme catalyses D-ribulose 1,5-bisphosphate + O2 = 2-phosphoglycolate + (2R)-3-phosphoglycerate + 2 H(+). RuBisCO catalyzes two reactions: the carboxylation of D-ribulose 1,5-bisphosphate, the primary event in carbon dioxide fixation, as well as the oxidative fragmentation of the pentose substrate. Both reactions occur simultaneously and in competition at the same active site. The polypeptide is Ribulose bisphosphate carboxylase large chain (Hydrogenophilus thermoluteolus (Pseudomonas hydrogenothermophila)).